The following is a 581-amino-acid chain: Ezrin (581 aa).

The region spanning P2 to R295 is the FERM domain. N6-acetyllysine is present on K60. The [IL]-x-C-x-x-[DE] motif motif lies at I115–E120. Phosphotyrosine; by PDGFR is present on Y146. The tract at residues E244–M581 is interaction with SCYL3. Positions V302–E462 form a coiled coil. The disordered stretch occupies residues K306–M341. Residues Q308–M341 are compositionally biased toward basic and acidic residues. At Y354 the chain carries Phosphotyrosine; by PDGFR. Residue S366 is modified to Phosphoserine. Y476 carries the post-translational modification Phosphotyrosine. Residues S534–Y560 are disordered. The segment covering Q535–Y560 has biased composition (basic and acidic residues). The residue at position 562 (T562) is a Phosphothreonine; by ROCK2 and PKC/PRKCI.

Interacts with PALS1 and NHERF2. Found in a complex with EZR, PODXL and NHERF2. Interacts with MCC, PLEKHG6, PODXL, SCYL3/PACE1, NHERF1 and TMEM8B. Interacts (when phosphorylated) with FES/FPS. Interacts with dimeric S100P, the interaction may be activating through unmasking of F-actin binding sites. Identified in complexes that contain VIM, EZR, AHNAK, BFSP1, BFSP2, ANK2, PLEC, PRX and spectrin. Detected in a complex composed of at least EZR, AHNAK, PPL and PRX. Interacts with PDPN (via cytoplasmic domain); activates RHOA and promotes epithelial-mesenchymal transition. Interacts with SPN/CD43 cytoplasmic tail, CD44 and ICAM2. Interacts with SLC9A3; interaction targets SLC9A3 to the apical membrane. Interacts with SLC9A1; regulates interactions of SLC9A1 with cytoskeletal and promotes stress fiber formation. Interacts with CLIC5; may work together in a complex which also includes RDX and MYO6 to stabilize linkages between the plasma membrane and subjacent actin cytoskeleton at the base of stereocilia. Phosphorylated by tyrosine-protein kinases. Phosphorylation by ROCK2 suppresses the head-to-tail association of the N-terminal and C-terminal halves resulting in an opened conformation which is capable of actin and membrane-binding. Post-translationally, S-nitrosylation is induced by interferon-gamma and oxidatively-modified low-densitity lipoprotein (LDL(ox)) possibly implicating the iNOS-S100A8/9 transnitrosylase complex. In terms of tissue distribution, detected in eye lens fiber cells (at protein level).

Its subcellular location is the apical cell membrane. It is found in the cell projection. The protein localises to the microvillus membrane. It localises to the ruffle membrane. The protein resides in the cytoplasm. Its subcellular location is the cell cortex. It is found in the cytoskeleton. The protein localises to the microvillus. With respect to regulation, a head-to-tail association, of the N-terminal and C-terminal halves results in a closed conformation (inactive form) which is incapable of actin or membrane-binding. Its function is as follows. Probably involved in connections of major cytoskeletal structures to the plasma membrane. In epithelial cells, required for the formation of microvilli and membrane ruffles on the apical pole. Along with PLEKHG6, required for normal macropinocytosis. This chain is Ezrin (EZR), found in Bos taurus (Bovine).